Here is a 191-residue protein sequence, read N- to C-terminus: Succinoglycan biosynthesis protein ExoI (191 aa).

The tract at residues 1–21 is disordered; it reads MTRIKSAVAAGGRRAPHSARL.

Its pathway is glycan metabolism; exopolysaccharide biosynthesis. This Rhizobium meliloti (strain 1021) (Ensifer meliloti) protein is Succinoglycan biosynthesis protein ExoI (exoI).